Consider the following 968-residue polypeptide: RNA polymerase-associated protein RapA (968 aa).

Residues 164–334 (DVGRRHAPRV…FARLRLLDPN (171 aa)) enclose the Helicase ATP-binding domain. 177–184 (DEVGLGKT) contributes to the ATP binding site. The DEAH box signature appears at 280-283 (DEAH). Residues 490-662 (RVEWLMGYLT…YLASPDETEG (173 aa)) enclose the Helicase C-terminal domain.

The protein belongs to the SNF2/RAD54 helicase family. RapA subfamily. As to quaternary structure, interacts with the RNAP. Has a higher affinity for the core RNAP than for the holoenzyme. Its ATPase activity is stimulated by binding to RNAP.

Its function is as follows. Transcription regulator that activates transcription by stimulating RNA polymerase (RNAP) recycling in case of stress conditions such as supercoiled DNA or high salt concentrations. Probably acts by releasing the RNAP, when it is trapped or immobilized on tightly supercoiled DNA. Does not activate transcription on linear DNA. Probably not involved in DNA repair. This chain is RNA polymerase-associated protein RapA, found in Escherichia coli O127:H6 (strain E2348/69 / EPEC).